An 800-amino-acid chain; its full sequence is Phenylalanine--tRNA ligase beta subunit (800 aa).

Residues T39–L154 form the tRNA-binding domain. The B5 domain occupies S408–S483. The Mg(2+) site is built by D461, D467, E470, and E471. An FDX-ACB domain is found at P708 to R800.

This sequence belongs to the phenylalanyl-tRNA synthetase beta subunit family. Type 1 subfamily. As to quaternary structure, tetramer of two alpha and two beta subunits. Mg(2+) is required as a cofactor.

Its subcellular location is the cytoplasm. The enzyme catalyses tRNA(Phe) + L-phenylalanine + ATP = L-phenylalanyl-tRNA(Phe) + AMP + diphosphate + H(+). The protein is Phenylalanine--tRNA ligase beta subunit of Staphylococcus epidermidis (strain ATCC 35984 / DSM 28319 / BCRC 17069 / CCUG 31568 / BM 3577 / RP62A).